The primary structure comprises 755 residues: Ribosome biogenesis protein BOP1 (755 aa).

Composition is skewed to polar residues over residues 1–10 (MSQEPSSSFS) and 43–61 (ELSS…TEPN). Residues 1 to 65 (MSQEPSSSFS…PLTEPNNIPI (65 aa)) are disordered. An interaction with EB1 region spans residues 309–754 (MDSMLPTLPN…SGTDGVLRLF (446 aa)). One copy of the WD 1 repeat lies at 335–374 (TGTRRINGLTFSPKGMFFAVGGRDCILRVFETYSGRQVRA). Residues 482 to 505 (YNEGSEDDDAAESARFNEERHQRG) form a disordered region. The segment covering 496-505 (RFNEERHQRG) has biased composition (basic and acidic residues). WD repeat units lie at residues 617 to 655 (PGVK…EPTA), 659 to 698 (YHTS…LVKM), and 725 to 755 (DGSV…RLFK).

This sequence belongs to the WD repeat BOP1/ERB1 family. In terms of assembly, interacts (via C-terminal WD repeats) with giardin subunit beta. Interacts (via C-terminal WD repeats) with EB1.

It is found in the nucleus. The protein localises to the nucleolus. Its subcellular location is the nucleus membrane. Its function is as follows. Required for maturation of ribosomal RNAs and formation of the large ribosomal subunit. The polypeptide is Ribosome biogenesis protein BOP1 (Giardia intestinalis (Giardia lamblia)).